A 277-amino-acid polypeptide reads, in one-letter code: Large ribosomal subunit protein uL2 (277 aa).

The tract at residues G222–K277 is disordered.

It belongs to the universal ribosomal protein uL2 family. As to quaternary structure, part of the 50S ribosomal subunit. Forms a bridge to the 30S subunit in the 70S ribosome.

In terms of biological role, one of the primary rRNA binding proteins. Required for association of the 30S and 50S subunits to form the 70S ribosome, for tRNA binding and peptide bond formation. It has been suggested to have peptidyltransferase activity; this is somewhat controversial. Makes several contacts with the 16S rRNA in the 70S ribosome. This is Large ribosomal subunit protein uL2 from Streptococcus agalactiae serotype Ia (strain ATCC 27591 / A909 / CDC SS700).